Reading from the N-terminus, the 276-residue chain is Golgi apparatus membrane protein TVP23 homolog C (276 aa).

M1 carries the post-translational modification N-acetylmethionine. The tract at residues M1–E21 is disordered. Transmembrane regions (helical) follow at residues L52 to L72 and I126 to L146. The tract at residues G254–H276 is disordered.

This sequence belongs to the TVP23 family.

The protein localises to the membrane. This chain is Golgi apparatus membrane protein TVP23 homolog C (TVP23C), found in Homo sapiens (Human).